Consider the following 210-residue polypeptide: Dynactin-associated protein (210 aa).

Residues 1–113 (MVADIKGNEQ…YCRNDWSMWK (113 aa)) lie on the Cytoplasmic side of the membrane. Residues 114–134 (VFLACLLACVIMTAIGVLIIC) form a helical; Signal-anchor for type II membrane protein membrane-spanning segment. Over 135–210 (LVNNKGSANS…PITVAPTDHL (76 aa)) the chain is Extracellular. The interval 168-210 (ACPPTMTTTSTVPASTATESTTSTATAATTSTEPITVAPTDHL) is disordered. The span at 171–203 (PTMTTTSTVPASTATESTTSTATAATTSTEPIT) shows a compositional bias: low complexity.

Interacts with DCTN1 and DCTN2. Expressed in fibroblast and numerous cancer cell lines (at protein level).

It is found in the golgi apparatus membrane. The protein resides in the cell membrane. In terms of biological role, plays a role in the regulation of cell proliferation. Promotes activation of the AKT1 signaling pathway. Promotes phosphorylation of AKT1 at 'Ser-473'. This chain is Dynactin-associated protein (DYNAP), found in Homo sapiens (Human).